Reading from the N-terminus, the 352-residue chain is Quinolinate synthase (352 aa).

Histidine 55 and serine 72 together coordinate iminosuccinate. Cysteine 117 contacts [4Fe-4S] cluster. Iminosuccinate is bound by residues 143-145 (YVN) and serine 160. Cysteine 204 provides a ligand contact to [4Fe-4S] cluster. Residues 230 to 232 (HPE) and threonine 258 each bind iminosuccinate. A [4Fe-4S] cluster-binding site is contributed by cysteine 303.

This sequence belongs to the quinolinate synthase family. Type 2 subfamily. [4Fe-4S] cluster serves as cofactor.

Its subcellular location is the cytoplasm. It catalyses the reaction iminosuccinate + dihydroxyacetone phosphate = quinolinate + phosphate + 2 H2O + H(+). It functions in the pathway cofactor biosynthesis; NAD(+) biosynthesis; quinolinate from iminoaspartate: step 1/1. Its function is as follows. Catalyzes the condensation of iminoaspartate with dihydroxyacetone phosphate to form quinolinate. The sequence is that of Quinolinate synthase from Mycobacterium leprae (strain Br4923).